The following is a 329-amino-acid chain: BTB/POZ domain-containing adapter for CUL3-mediated RhoA degradation protein 1 (329 aa).

Residues 1-15 (MSAEASGPAAAEAPS) are compositionally biased toward low complexity. Residues 1–21 (MSAEASGPAAAEAPSLEVAKP) are disordered. Residues 41 to 109 (KYVKLNVGGS…LRDGSVPLPE (69 aa)) enclose the BTB domain. Residues 280 to 302 (LEATGGAAGGGGASRGEDEDNRE) are disordered.

The protein belongs to the BACURD family. As to quaternary structure, homotetramer; forms a two-fold symmetric tetramer in solution. Interacts with CUL3; interaction is direct and forms a 5:5 heterodecamer. Component of the BCR(KCTD13) E3 ubiquitin ligase complex, at least composed of CUL3, KCTD13/BACURD1 and RBX1. Interacts with RHOA; with a preference for RhoA-GDP. Interacts with POLD2 and PCNA. Interacts with SPRTN.

Its subcellular location is the nucleus. Its pathway is protein modification; protein ubiquitination. Functionally, substrate-specific adapter of a BCR (BTB-CUL3-RBX1) E3 ubiquitin-protein ligase complex required for synaptic transmission. The BCR(KCTD13) E3 ubiquitin ligase complex mediates the ubiquitination of RHOA, leading to its degradation by the proteasome, thereby regulating the actin cytoskeleton and promoting synaptic transmission. The protein is BTB/POZ domain-containing adapter for CUL3-mediated RhoA degradation protein 1 (KCTD13) of Bos taurus (Bovine).